Reading from the N-terminus, the 93-residue chain is Small ribosomal subunit protein uS19 (93 aa).

This sequence belongs to the universal ribosomal protein uS19 family.

Protein S19 forms a complex with S13 that binds strongly to the 16S ribosomal RNA. The polypeptide is Small ribosomal subunit protein uS19 (Alkaliphilus oremlandii (strain OhILAs) (Clostridium oremlandii (strain OhILAs))).